Reading from the N-terminus, the 454-residue chain is Chromosomal replication initiator protein DnaA (454 aa).

The interval 1–74 (MFDLDKFWQF…IQEAYAYADM (74 aa)) is domain I, interacts with DnaA modulators. The interval 74 to 116 (MEIQPKFEVAGKEGPERLVTPQPRIKTNQEILENRRDEFAQDL) is domain II. The segment at 117 to 333 (QLNSKYTFDT…GALVKVQAHA (217 aa)) is domain III, AAA+ region. Residues Gly-161, Gly-163, Lys-164, and Thr-165 each contribute to the ATP site. The domain IV, binds dsDNA stretch occupies residues 334–454 (TIEREDINVD…VYDLKAMLEH (121 aa)).

The protein belongs to the DnaA family. In terms of assembly, oligomerizes as a right-handed, spiral filament on DNA at oriC.

It localises to the cytoplasm. Functionally, plays an essential role in the initiation and regulation of chromosomal replication. ATP-DnaA binds to the origin of replication (oriC) to initiate formation of the DNA replication initiation complex once per cell cycle. Binds the DnaA box (a 9 base pair repeat at the origin) and separates the double-stranded (ds)DNA. Forms a right-handed helical filament on oriC DNA; dsDNA binds to the exterior of the filament while single-stranded (ss)DNA is stabiized in the filament's interior. The ATP-DnaA-oriC complex binds and stabilizes one strand of the AT-rich DNA unwinding element (DUE), permitting loading of DNA polymerase. After initiation quickly degrades to an ADP-DnaA complex that is not apt for DNA replication. Binds acidic phospholipids. The protein is Chromosomal replication initiator protein DnaA of Lactobacillus johnsonii (strain CNCM I-12250 / La1 / NCC 533).